Consider the following 93-residue polypeptide: Small ribosomal subunit protein uS19 (93 aa).

It belongs to the universal ribosomal protein uS19 family.

Functionally, protein S19 forms a complex with S13 that binds strongly to the 16S ribosomal RNA. The chain is Small ribosomal subunit protein uS19 from Clostridium acetobutylicum (strain ATCC 824 / DSM 792 / JCM 1419 / IAM 19013 / LMG 5710 / NBRC 13948 / NRRL B-527 / VKM B-1787 / 2291 / W).